Consider the following 347-residue polypeptide: Phosphoribosylformylglycinamidine cyclo-ligase (347 aa).

Belongs to the AIR synthase family.

It is found in the cytoplasm. It carries out the reaction 2-formamido-N(1)-(5-O-phospho-beta-D-ribosyl)acetamidine + ATP = 5-amino-1-(5-phospho-beta-D-ribosyl)imidazole + ADP + phosphate + H(+). It functions in the pathway purine metabolism; IMP biosynthesis via de novo pathway; 5-amino-1-(5-phospho-D-ribosyl)imidazole from N(2)-formyl-N(1)-(5-phospho-D-ribosyl)glycinamide: step 2/2. This is Phosphoribosylformylglycinamidine cyclo-ligase from Yersinia pseudotuberculosis serotype O:1b (strain IP 31758).